The primary structure comprises 375 residues: Aminomethyltransferase (375 aa).

Belongs to the GcvT family. In terms of assembly, the glycine cleavage system is composed of four proteins: P, T, L and H.

It catalyses the reaction N(6)-[(R)-S(8)-aminomethyldihydrolipoyl]-L-lysyl-[protein] + (6S)-5,6,7,8-tetrahydrofolate = N(6)-[(R)-dihydrolipoyl]-L-lysyl-[protein] + (6R)-5,10-methylene-5,6,7,8-tetrahydrofolate + NH4(+). Functionally, the glycine cleavage system catalyzes the degradation of glycine. The protein is Aminomethyltransferase of Cupriavidus metallidurans (strain ATCC 43123 / DSM 2839 / NBRC 102507 / CH34) (Ralstonia metallidurans).